We begin with the raw amino-acid sequence, 134 residues long: Prolactin (134 aa).

A disulfide bridge links Cys126 with Cys134.

The protein belongs to the somatotropin/prolactin family.

The protein resides in the secreted. This Bufo japonicus (Japanese common toad) protein is Prolactin.